The primary structure comprises 411 residues: Peptidase T (411 aa).

A Zn(2+)-binding site is contributed by His-78. Asp-80 is an active-site residue. Residue Asp-140 participates in Zn(2+) binding. Catalysis depends on Glu-173, which acts as the Proton acceptor. Zn(2+) is bound by residues Glu-174, Asp-196, and His-379.

The protein belongs to the peptidase M20B family. The cofactor is Zn(2+).

The protein localises to the cytoplasm. It catalyses the reaction Release of the N-terminal residue from a tripeptide.. Cleaves the N-terminal amino acid of tripeptides. The protein is Peptidase T of Yersinia pseudotuberculosis serotype O:1b (strain IP 31758).